A 628-amino-acid polypeptide reads, in one-letter code: ATP-dependent zinc metalloprotease FtsH 4 (628 aa).

At 1–14 (MAIKPQPQWQRRLA) the chain is on the cytoplasmic side. The chain crosses the membrane as a helical span at residues 15–35 (SVLLWGSTIYLLVNLLAPALF). The Lumenal segment spans residues 36–119 (RSQPPQVPYS…AAAPPAKNSW (84 aa)). Residues 120 to 140 (FGTLLSWVIPPLIFVGIWSFF) form a helical membrane-spanning segment. At 141-628 (LNRNNNGAPG…QVQAPGTLVV (488 aa)) the chain is on the cytoplasmic side. Residue 214-221 (GPPGTGKT) coordinates ATP. Residue H438 coordinates Zn(2+). E439 is an active-site residue. Residues H442 and D515 each contribute to the Zn(2+) site.

It in the central section; belongs to the AAA ATPase family. In the C-terminal section; belongs to the peptidase M41 family. In terms of assembly, homohexamer. Requires Zn(2+) as cofactor.

It localises to the cellular thylakoid membrane. In terms of biological role, acts as a processive, ATP-dependent zinc metallopeptidase for both cytoplasmic and membrane proteins. Plays a role in the quality control of integral membrane proteins. This Synechocystis sp. (strain ATCC 27184 / PCC 6803 / Kazusa) protein is ATP-dependent zinc metalloprotease FtsH 4.